The following is a 253-amino-acid chain: DNA repair protein RecO (253 aa).

Belongs to the RecO family.

Functionally, involved in DNA repair and RecF pathway recombination. This is DNA repair protein RecO from Staphylococcus epidermidis (strain ATCC 35984 / DSM 28319 / BCRC 17069 / CCUG 31568 / BM 3577 / RP62A).